A 415-amino-acid chain; its full sequence is Serine hydroxymethyltransferase (415 aa).

(6S)-5,6,7,8-tetrahydrofolate is bound by residues L122 and 126 to 128 (GHL). K230 carries the N6-(pyridoxal phosphate)lysine modification.

This sequence belongs to the SHMT family. Homodimer. Pyridoxal 5'-phosphate is required as a cofactor.

The protein localises to the cytoplasm. It carries out the reaction (6R)-5,10-methylene-5,6,7,8-tetrahydrofolate + glycine + H2O = (6S)-5,6,7,8-tetrahydrofolate + L-serine. It participates in one-carbon metabolism; tetrahydrofolate interconversion. It functions in the pathway amino-acid biosynthesis; glycine biosynthesis; glycine from L-serine: step 1/1. In terms of biological role, catalyzes the reversible interconversion of serine and glycine with tetrahydrofolate (THF) serving as the one-carbon carrier. This reaction serves as the major source of one-carbon groups required for the biosynthesis of purines, thymidylate, methionine, and other important biomolecules. Also exhibits THF-independent aldolase activity toward beta-hydroxyamino acids, producing glycine and aldehydes, via a retro-aldol mechanism. The sequence is that of Serine hydroxymethyltransferase from Cupriavidus necator (strain ATCC 17699 / DSM 428 / KCTC 22496 / NCIMB 10442 / H16 / Stanier 337) (Ralstonia eutropha).